The chain runs to 175 residues: Shikimate kinase (175 aa).

ATP is bound at residue 10 to 15; it reads GAGKTT. A Mg(2+)-binding site is contributed by Thr-14. Asp-32, Arg-56, and Gly-78 together coordinate substrate. Arg-116 serves as a coordination point for ATP. Substrate is bound at residue Arg-135.

It belongs to the shikimate kinase family. As to quaternary structure, monomer. Mg(2+) is required as a cofactor.

The protein localises to the cytoplasm. The enzyme catalyses shikimate + ATP = 3-phosphoshikimate + ADP + H(+). Its pathway is metabolic intermediate biosynthesis; chorismate biosynthesis; chorismate from D-erythrose 4-phosphate and phosphoenolpyruvate: step 5/7. In terms of biological role, catalyzes the specific phosphorylation of the 3-hydroxyl group of shikimic acid using ATP as a cosubstrate. This chain is Shikimate kinase, found in Aromatoleum aromaticum (strain DSM 19018 / LMG 30748 / EbN1) (Azoarcus sp. (strain EbN1)).